Reading from the N-terminus, the 425-residue chain is Serine/threonine-protein kinase VRK1 (425 aa).

The Protein kinase domain maps to 38 to 329; the sequence is WKLGSAVGQG…KLRGILQQGL (292 aa). ATP is bound by residues 44-52 and K72; that span reads VGQGGFGLL. D178 serves as the catalytic Proton acceptor. Residues 343–425 form a disordered region; it reads GVATNSTSLP…KSRGRPKKNS (83 aa). A compositionally biased stretch (basic residues) spans 415 to 425; it reads KKSRGRPKKNS.

Belongs to the protein kinase superfamily. CK1 Ser/Thr protein kinase family. VRK subfamily.

Its subcellular location is the nucleus. The protein resides in the cytoplasm. It is found in the cajal body. The enzyme catalyses L-seryl-[protein] + ATP = O-phospho-L-seryl-[protein] + ADP + H(+). It carries out the reaction L-threonyl-[protein] + ATP = O-phospho-L-threonyl-[protein] + ADP + H(+). In terms of biological role, serine/threonine kinase involved in the regulation of key cellular processes including the cell cycle, nuclear condensation, transcription regulation, and DNA damage response. Controls chromatin organization and remodeling by mediating phosphorylation of histone H3 on 'Thr-4' and histone H2AX (H2aXT4ph). It also phosphorylates KAT5 in response to DNA damage, promoting KAT5 association with chromatin and histone acetyltransferase activity. Is involved in the regulation of cell cycle progression of neural progenitors, and is required for proper cortical neuronal migration. Is involved in neurite elongation and branching in motor neurons, and has an essential role in Cajal bodies assembly, acting through COIL phosphorylation and the control of coilin degradation. Involved in Golgi disassembly during the cell cycle: following phosphorylation by PLK3 during mitosis, it is required to induce Golgi fragmentation. Phosphorylates BANF1: disrupts its ability to bind DNA, reduces its binding to LEM domain-containing proteins and causes its relocalization from the nucleus to the cytoplasm. Phosphorylates TP53BP1 and p53/TP53 on 'Thr-18', preventing the interaction between p53/TP53 and MDM2. Phosphorylates ATF2 which activates its transcriptional activity. Phosphorylates JUN. This Danio rerio (Zebrafish) protein is Serine/threonine-protein kinase VRK1 (vrk1).